Reading from the N-terminus, the 506-residue chain is Aldehyde dehydrogenase (506 aa).

NAD(+) is bound at residue 218 to 224 (GFGLEAG). Active-site residues include glutamate 262 and cysteine 301.

Belongs to the aldehyde dehydrogenase family.

It catalyses the reaction an aldehyde + NAD(+) + H2O = a carboxylate + NADH + 2 H(+). The protein is Aldehyde dehydrogenase of Rhodospirillum rubrum (strain ATCC 11170 / ATH 1.1.1 / DSM 467 / LMG 4362 / NCIMB 8255 / S1).